The chain runs to 185 residues: Alkyl hydroperoxide reductase AhpD (185 aa).

Cys132 functions as the Proton donor in the catalytic mechanism. Cys132 and Cys135 are joined by a disulfide. Residue Cys135 is the Cysteine sulfenic acid (-SOH) intermediate of the active site.

This sequence belongs to the AhpD family.

It catalyses the reaction N(6)-[(R)-dihydrolipoyl]-L-lysyl-[lipoyl-carrier protein] + a hydroperoxide = N(6)-[(R)-lipoyl]-L-lysyl-[lipoyl-carrier protein] + an alcohol + H2O. Its function is as follows. Antioxidant protein with alkyl hydroperoxidase activity. Required for the reduction of the AhpC active site cysteine residues and for the regeneration of the AhpC enzyme activity. In Anaeromyxobacter sp. (strain Fw109-5), this protein is Alkyl hydroperoxide reductase AhpD.